The chain runs to 881 residues: DNA replication helicase (881 aa).

The disordered stretch occupies residues 1-32 (MESADILPGSRGTVDRRCEGSEEKITPPRPVE). Positions 13-32 (TVDRRCEGSEEKITPPRPVE) are enriched in basic and acidic residues. An ATP-binding site is contributed by 105–112 (GNAGSGKS).

The protein belongs to the herpesviridae helicase family. Associates with the primase and the primase-associated factor to form the helicase-primase complex.

Its subcellular location is the host nucleus. Its function is as follows. Component of the helicase/primase complex. Unwinds the DNA at the replication forks and generates single-stranded DNA for both leading and lagging strand synthesis. The primase synthesizes short RNA primers on the lagging strand that the polymerase elongates using dNTPs. Possesses helicase-like motifs and therefore may act as the helicase subunit of the complex. The polypeptide is DNA replication helicase (Equus caballus (Horse)).